The sequence spans 845 residues: Protein P (845 aa).

The interval 1–179 is terminal protein domain (TP); sequence MPLSYQHFRK…FCGSPYSWEQ (179 aa). Residues 180-348 are spacer; that stretch reads ELQHGRLVIK…YCLSHLVNLR (169 aa). A disordered region spans residues 226 to 252; the sequence is GLQPRQGRLASSQPSRSGSIRAKAHPS. Polar residues predominate over residues 234–243; that stretch reads LASSQPSRSG. The tract at residues 349-692 is polymerase/reverse transcriptase domain (RT); the sequence is EDWGPCDEHG…YMNLYPVARQ (344 aa). The Reverse transcriptase domain maps to 359 to 602; it reads EHHIRIPRTP…YSLNFMGYII (244 aa). Residues Asp-431, Asp-553, and Asp-554 each coordinate Mg(2+). The rnaseH domain (RH) stretch occupies residues 693–845; it reads RPGLCQVFAD…SPLHVAWRPP (153 aa).

Belongs to the hepadnaviridae P protein family.

The enzyme catalyses DNA(n) + a 2'-deoxyribonucleoside 5'-triphosphate = DNA(n+1) + diphosphate. It catalyses the reaction Endonucleolytic cleavage to 5'-phosphomonoester.. Its activity is regulated as follows. Activated by host HSP70 and HSP40 in vitro to be able to bind the epsilon loop of the pgRNA. Because deletion of the RNase H region renders the protein partly chaperone-independent, the chaperones may be needed indirectly to relieve occlusion of the RNA-binding site by this domain. Inhibited by several reverse-transcriptase inhibitors: Lamivudine, Adefovir and Entecavir. Multifunctional enzyme that converts the viral RNA genome into dsDNA in viral cytoplasmic capsids. This enzyme displays a DNA polymerase activity that can copy either DNA or RNA templates, and a ribonuclease H (RNase H) activity that cleaves the RNA strand of RNA-DNA heteroduplexes in a partially processive 3'- to 5'-endonucleasic mode. Neo-synthesized pregenomic RNA (pgRNA) are encapsidated together with the P protein, and reverse-transcribed inside the nucleocapsid. Initiation of reverse-transcription occurs first by binding the epsilon loop on the pgRNA genome, and is initiated by protein priming, thereby the 5'-end of (-)DNA is covalently linked to P protein. Partial (+)DNA is synthesized from the (-)DNA template and generates the relaxed circular DNA (RC-DNA) genome. After budding and infection, the RC-DNA migrates in the nucleus, and is converted into a plasmid-like covalently closed circular DNA (cccDNA). The activity of P protein does not seem to be necessary for cccDNA generation, and is presumably released from (+)DNA by host nuclear DNA repair machinery. The polypeptide is Protein P (Homo sapiens (Human)).